The sequence spans 212 residues: Claudin-7-A (212 aa).

Topologically, residues Met-1–Gln-7 are cytoplasmic. Residues Leu-8–Pro-28 form a helical membrane-spanning segment. Over Gln-29 to Arg-81 the chain is Extracellular. The helical transmembrane segment at Ala-82 to Met-102 threads the bilayer. The Cytoplasmic portion of the chain corresponds to Lys-103 to Ala-119. The chain crosses the membrane as a helical span at residues Met-120–Phe-140. Over Ala-141–Gly-162 the chain is Extracellular. Residues Ala-163–Ala-183 traverse the membrane as a helical segment. Over Ala-184–Val-212 the chain is Cytoplasmic. Residues Gln-191–Val-212 are disordered.

Belongs to the claudin family.

It localises to the cell junction. It is found in the tight junction. Its subcellular location is the cell membrane. Functionally, plays a major role in tight junction-specific obliteration of the intercellular space. In Danio rerio (Zebrafish), this protein is Claudin-7-A.